The primary structure comprises 260 residues: Movement protein (260 aa).

Positions 230–260 (SGDTAEEAGEASSGEPHWVPEATAPRVRKAT) are disordered.

In terms of biological role, transports viral genome to neighboring plant cells directly through plasmosdesmata, without any budding. The movement protein allows efficient cell to cell propagation, by bypassing the host cell wall barrier. Might act by forming tubules structures that increase the size exclusion limit (SEL) of plasmodesmata, thereby allowing viral ribonucleoproteins to spread directly to neighboring cells. Binds to ssRNA. The chain is Movement protein from Groundnut rosette virus (strain MC1) (GRV).